Consider the following 117-residue polypeptide: MKTIIAIFSLAAMIVLVRPTPLENDEWTRSIINVPCKKCYKKDSNGVCRKIFGCQEKRNIIDPPCRKCYKKDSNNKCVRIAGCGNEAVKRAIINPQGCARCHKPDPNGKCRKIHGCS.

An N-terminal signal peptide occupies residues 1 to 23; sequence MKTIIAIFSLAAMIVLVRPTPLE. 3 tandem repeats follow at residues 28-56, 57-88, and 89-117. Residues 29-117 form a 3 X approximate tandem repeats region; it reads RSIINVPCKK…GKCRKIHGCS (89 aa).

Contains 6 disulfide bonds. Expressed outside of acontia.

The protein localises to the secreted. Its subcellular location is the nematocyst. In terms of biological role, putative neurotoxin. The chain is Structural toxin peptide sea anemone type 9a from Calliactis polypus (Hermit crab anemone).